Here is a 425-residue protein sequence, read N- to C-terminus: Serine--tRNA ligase (425 aa).

231–233 (TAE) contacts L-serine. Residue 262-264 (RSE) participates in ATP binding. Glutamate 285 serves as a coordination point for L-serine. 349–352 (EISS) lines the ATP pocket. Residue serine 385 coordinates L-serine.

This sequence belongs to the class-II aminoacyl-tRNA synthetase family. Type-1 seryl-tRNA synthetase subfamily. In terms of assembly, homodimer. The tRNA molecule binds across the dimer.

It localises to the cytoplasm. The catalysed reaction is tRNA(Ser) + L-serine + ATP = L-seryl-tRNA(Ser) + AMP + diphosphate + H(+). It carries out the reaction tRNA(Sec) + L-serine + ATP = L-seryl-tRNA(Sec) + AMP + diphosphate + H(+). Its pathway is aminoacyl-tRNA biosynthesis; selenocysteinyl-tRNA(Sec) biosynthesis; L-seryl-tRNA(Sec) from L-serine and tRNA(Sec): step 1/1. Functionally, catalyzes the attachment of serine to tRNA(Ser). Is also able to aminoacylate tRNA(Sec) with serine, to form the misacylated tRNA L-seryl-tRNA(Sec), which will be further converted into selenocysteinyl-tRNA(Sec). The protein is Serine--tRNA ligase of Bacillus subtilis (strain 168).